A 509-amino-acid chain; its full sequence is MFLLMVPLFSYLAAASLRVLSPNPASCDSPELGYQCNSETTHTWGQYSPFFSVPSEISPSVPEGCRLTFAQVLSRHGARFPTPGKAAAISAVLTKIKTSATWYAPDFEFIKDYNYVLGVDHLTAFGEQEMVNSGIKFYQRYASLIRDYTDPESLPFIRASGQERVIASAENFTTGFYSALLADKNPPPSSLPLPRQEMVIISESPTANNTMHHGLCRAFEDSTTGDAAQATFIAANFPPITARLNAQGFKGVTLSDTDVLSLMDLCPFDTVAYPPSSSLTTSSSPSGGSKLSPFCSLFTAQDFTVYDYLQSLGKFYGYGPGNSLAATQGVGYVNELLARLTVSPVVDNTTTNSTLDGNEDTFPLSRNRTVFADFSHDNDMMGILTALRIFEGVDAEKMMDNTTIPREYGETGDDPANLKEREGLFKVGWVVPFAARVYFEKMICDGDGSGEMVQSEEEQDKELVRILVNDRVVKLNGCEADELGRCKLDKFVESMEFARRGGDWDKCFA.

The N-terminal stretch at 1–15 is a signal peptide; it reads MFLLMVPLFSYLAAA. The cysteines at positions 27 and 36 are disulfide-linked. 7 residues coordinate 1D-myo-inositol hexakisphosphate: glutamine 46, tyrosine 47, arginine 75, histidine 76, arginine 79, threonine 82, and arginine 164. Cystine bridges form between cysteine 65–cysteine 444, cysteine 216–cysteine 507, cysteine 266–cysteine 295, and cysteine 478–cysteine 486. The active-site Nucleophile is histidine 76. Asparagine 171 and asparagine 208 each carry an N-linked (GlcNAc...) asparagine glycan. Lysine 314 contributes to the 1D-myo-inositol hexakisphosphate binding site. Residues asparagine 348, asparagine 352, and asparagine 367 are each glycosylated (N-linked (GlcNAc...) asparagine). 1D-myo-inositol hexakisphosphate is bound by residues histidine 376 and aspartate 377. Asparagine 401 carries an N-linked (GlcNAc...) asparagine glycan.

This sequence belongs to the histidine acid phosphatase family. Monomer.

The protein localises to the secreted. It catalyses the reaction 1D-myo-inositol hexakisphosphate + H2O = 1D-myo-inositol 1,2,4,5,6-pentakisphosphate + phosphate. It carries out the reaction 1D-myo-inositol 1,2,4,5,6-pentakisphosphate + H2O = 1D-myo-inositol 1,2,5,6-tetrakisphosphate + phosphate. The enzyme catalyses 1D-myo-inositol 1,2,5,6-tetrakisphosphate + H2O = 1D-myo-inositol 1,2,6-trisphosphate + phosphate. The catalysed reaction is 1D-myo-inositol 1,2,6-trisphosphate + H2O = 1D-myo-inositol 1,2-bisphosphate + phosphate. It catalyses the reaction 1D-myo-inositol 1,2-bisphosphate + H2O = 1D-myo-inositol 2-phosphate + phosphate. Catalyzes the phosphate monoester hydrolysis of phytic acid (myo-inositol hexakisphosphate), which results in the stepwise formation of myo-inositol pentakis-, tetrakis-, tris-, bis-, and monophosphates, as well as the liberation of inorganic phosphate. Myo-inositol 2-monophosphate is the end product. Is also able to dephosphorylate the classic acid phosphatase substrate p-nitrophenyl phosphate. In Neurospora crassa (strain ATCC 24698 / 74-OR23-1A / CBS 708.71 / DSM 1257 / FGSC 987), this protein is Phytase A (pht-1).